A 517-amino-acid polypeptide reads, in one-letter code: Cytochrome P450 monooxygenase stcB (517 aa).

Cys461 contributes to the heme binding site.

This sequence belongs to the cytochrome P450 family. It depends on heme as a cofactor.

Its pathway is mycotoxin biosynthesis; sterigmatocystin biosynthesis. In terms of biological role, cytochrome P450 monooxygenase; part of the gene cluster that mediates the biosynthesis of sterigmatocystin (ST), a polyketide-derived furanocoumarin which is part of the most toxic and carcinogenic compounds among the known mycotoxins. The first step in the biosynthesis of sterigmatocystin is the production of hexanoate by the fatty acid synthase (FAS) units stcJ and stcK. The polyketide backbone is assembled by the non-reducing polyketide synthase stcA by condensation of the starter hexanoyl-CoA and 7 malonyl-CoA extender units followed by cyclization and release of norsolorinic acid. Norsolorinic acid is the first stable intermediate in the biosynthesis of sterigmatocystin and is converted into averantin (AVN) by the ketoreductase stcE which reduces the hexanoate ketone to an alcohol. Averantin is then oxidized into 5'-hydroxyaverantin (HAVN) by the cytochrome P450 monooxygenase stcF. 5'-hydroxyaverantin is further converted to 5'-oxyaverantin (OAVN) by the 5'-hydroxyaverantin dehydrogenase stcG. The next step is the conversion of OAVN into averufin (AVF) which is catalyzed by a yet to be identified enzyme. The cytochrome P450 monooxygenase stcB and the flavin-binding monooxygenase stcW are both required for the conversion of averufin to 1-hydroxyversicolorone. The esterase stcI probably catalyzes the formation of versiconal hemiacetal acetate from 1-hydroxyversicolorone. The oxydoreductase stcN then probably catalyzes the biosynthetic step from versiconal to versicolorin B (VERB). The next step is performed by the versicolorin B desaturase stcL to produce versicolorin A (VERA). The ketoreductase stcU and the cytochrome P450 monooxygenase stcS are involved in the conversion of versicolorin A to demethylsterigmatocystin. The Baeyer-Villiger oxidas stcQ and the reductase stcR might be involved in the biosynthetic step from versicolorin A to demethylsterigmatocystin. The final step in the biosynthesis of sterigmatocystin is the methylation of demethylsterigmatocystin catalyzed by the methyltransferase stcP. The polypeptide is Cytochrome P450 monooxygenase stcB (Emericella nidulans (strain FGSC A4 / ATCC 38163 / CBS 112.46 / NRRL 194 / M139) (Aspergillus nidulans)).